The sequence spans 515 residues: Maturase K (515 aa).

The protein belongs to the intron maturase 2 family. MatK subfamily.

The protein localises to the plastid. The protein resides in the chloroplast. In terms of biological role, usually encoded in the trnK tRNA gene intron. Probably assists in splicing its own and other chloroplast group II introns. The polypeptide is Maturase K (Pinus armandii (Chinese white pine)).